The sequence spans 520 residues: UvrABC system protein C (520 aa).

Positions 11–89 (EEPGCYQFKD…IKKYQPKYNI (79 aa)) constitute a GIY-YIG domain. Residues 195-230 (QDLIYDLRKEMETFAAAEEYEKALVIRDRIAAIENL) enclose the UVR domain.

The protein belongs to the UvrC family. In terms of assembly, interacts with UvrB in an incision complex.

The protein resides in the cytoplasm. Functionally, the UvrABC repair system catalyzes the recognition and processing of DNA lesions. UvrC both incises the 5' and 3' sides of the lesion. The N-terminal half is responsible for the 3' incision and the C-terminal half is responsible for the 5' incision. This Methanospirillum hungatei JF-1 (strain ATCC 27890 / DSM 864 / NBRC 100397 / JF-1) protein is UvrABC system protein C.